The following is a 429-amino-acid chain: Histidine--tRNA ligase (429 aa).

The protein belongs to the class-II aminoacyl-tRNA synthetase family. In terms of assembly, homodimer.

It localises to the cytoplasm. It catalyses the reaction tRNA(His) + L-histidine + ATP = L-histidyl-tRNA(His) + AMP + diphosphate + H(+). This Stutzerimonas stutzeri (strain A1501) (Pseudomonas stutzeri) protein is Histidine--tRNA ligase.